The following is a 209-amino-acid chain: MNKGYPVTDLVILAGGQARRMNGLNKLLQQFDGDTQLLKIHQKLKSSVSEIWVNSHRDYSIYQSIVPDIKCFQDDASGFFGPLMGMKSAWSHVKADYVLFIPCDVTYIPTQVVAKLHSALRKNKQAQAAYVSINGDALYPFCLLKRESLEVLEQQIDKQQLSLKNCFKLLHAQVAIFQKQNLFFHSINSLDELQQYKQIKAFKEIFSTN.

GTP contacts are provided by residues 13–15 (LAG), Lys-26, Asn-54, Asp-74, and Asp-104. Asp-104 serves as a coordination point for Mg(2+).

The protein belongs to the MobA family. Monomer. Mg(2+) is required as a cofactor.

It is found in the cytoplasm. The catalysed reaction is Mo-molybdopterin + GTP + H(+) = Mo-molybdopterin guanine dinucleotide + diphosphate. In terms of biological role, transfers a GMP moiety from GTP to Mo-molybdopterin (Mo-MPT) cofactor (Moco or molybdenum cofactor) to form Mo-molybdopterin guanine dinucleotide (Mo-MGD) cofactor. The polypeptide is Molybdenum cofactor guanylyltransferase (Acinetobacter baumannii (strain ATCC 17978 / DSM 105126 / CIP 53.77 / LMG 1025 / NCDC KC755 / 5377)).